Reading from the N-terminus, the 160-residue chain is 3-hydroxyacyl-[acyl-carrier-protein] dehydratase FabZ (160 aa).

Residue histidine 63 is part of the active site.

It belongs to the thioester dehydratase family. FabZ subfamily.

It localises to the cytoplasm. The enzyme catalyses a (3R)-hydroxyacyl-[ACP] = a (2E)-enoyl-[ACP] + H2O. Its function is as follows. Involved in unsaturated fatty acids biosynthesis. Catalyzes the dehydration of short chain beta-hydroxyacyl-ACPs and long chain saturated and unsaturated beta-hydroxyacyl-ACPs. This is 3-hydroxyacyl-[acyl-carrier-protein] dehydratase FabZ from Xylella fastidiosa (strain M12).